Consider the following 435-residue polypeptide: 26S proteasome regulatory subunit 7 (435 aa).

Over residues 1 to 23 (MPDHLGDDMRKTKKDDTKEEEKN) the composition is skewed to basic and acidic residues. Residues 1–24 (MPDHLGDDMRKTKKDDTKEEEKNF) are disordered. 218–225 (GPPGTGKT) is a binding site for ATP.

The protein belongs to the AAA ATPase family.

The protein resides in the cytoplasm. It is found in the nucleus. In terms of biological role, the 26S proteasome is involved in the ATP-dependent degradation of ubiquitinated proteins. The regulatory (or ATPase) complex confers ATP dependency and substrate specificity to the 26S complex. This Caenorhabditis elegans protein is 26S proteasome regulatory subunit 7 (rpt-1).